The following is a 30-amino-acid chain: Chassatide C3 (30 aa).

The cyclopeptide (Gly-Asn) cross-link spans 1-30; sequence GIPCGESCVWIPCISSALGCSCKNKVCYRN. Intrachain disulfides connect C4-C20, C8-C22, and C13-C27.

In terms of processing, this is a cyclic peptide. In terms of tissue distribution, expressed in fruit, pedicel, stem and root but not in leaf (at protein level).

In terms of biological role, probably participates in a plant defense mechanism. This Chassalia chartacea (Chassalia curviflora) protein is Chassatide C3.